The following is a 624-amino-acid chain: Chaperone protein HtpG (624 aa).

Positions 1 to 336 (MKGQETRGFQ…SNDLPLNVSR (336 aa)) are a; substrate-binding. Residues 337–552 (EILQDSTVTR…ADEMGTQMAK (216 aa)) are b. The c stretch occupies residues 553-624 (LFAAAGQAMP…IKRVNALLLG (72 aa)).

The protein belongs to the heat shock protein 90 family. Homodimer.

The protein localises to the cytoplasm. Its function is as follows. Molecular chaperone. Has ATPase activity. This Enterobacter sp. (strain 638) protein is Chaperone protein HtpG.